The sequence spans 276 residues: uncharacterized protein (276 aa).

The propeptide at 1-4 (MNRG) is leader sequence. Met5 is subject to N-methylmethionine. The chain crosses the membrane as a helical span at residues 5-26 (MTLIELLVALALSIILSLGLYY).

It is found in the membrane. This is an uncharacterized protein from Aquifex aeolicus (strain VF5).